Reading from the N-terminus, the 421-residue chain is Histidine--tRNA ligase (421 aa).

The protein belongs to the class-II aminoacyl-tRNA synthetase family. As to quaternary structure, homodimer.

Its subcellular location is the cytoplasm. It catalyses the reaction tRNA(His) + L-histidine + ATP = L-histidyl-tRNA(His) + AMP + diphosphate + H(+). The protein is Histidine--tRNA ligase of Francisella tularensis subsp. novicida (strain U112).